Here is a 27-residue protein sequence, read N- to C-terminus: Cupiennin-4a (27 aa).

The residue at position 27 (Glu-27) is a Glutamic acid 1-amide.

Expressed by the venom gland.

It is found in the secreted. This Cupiennius salei (American wandering spider) protein is Cupiennin-4a.